Here is a 387-residue protein sequence, read N- to C-terminus: Exodeoxyribonuclease 7 large subunit (387 aa).

The protein belongs to the XseA family. Heterooligomer composed of large and small subunits.

The protein resides in the cytoplasm. The enzyme catalyses Exonucleolytic cleavage in either 5'- to 3'- or 3'- to 5'-direction to yield nucleoside 5'-phosphates.. Functionally, bidirectionally degrades single-stranded DNA into large acid-insoluble oligonucleotides, which are then degraded further into small acid-soluble oligonucleotides. The chain is Exodeoxyribonuclease 7 large subunit from Campylobacter lari (strain RM2100 / D67 / ATCC BAA-1060).